Reading from the N-terminus, the 165-residue chain is MAGRLDEDLKDVTLLGNQNTKYLFEYSPEILEVFDNNHPNRDYFVKFNCPEFTSLCPKTGQPDFATIYISYIPEQRMVESKSLKLYLFSFRNHGDFHEDCMNVIMNDLIKLMDPRYIEVWGKFTPRGGISIDPYCNYGRPGTKYEKMADYRMMNHDLYPEKIDNR.

Cys-56 acts as the Thioimide intermediate in catalysis. The active-site Proton donor is the Asp-63. Substrate is bound by residues 78-80 and 97-98; these read VES and HE.

The protein belongs to the GTP cyclohydrolase I family. QueF type 1 subfamily.

It is found in the cytoplasm. It carries out the reaction 7-aminomethyl-7-carbaguanine + 2 NADP(+) = 7-cyano-7-deazaguanine + 2 NADPH + 3 H(+). The protein operates within tRNA modification; tRNA-queuosine biosynthesis. In terms of biological role, catalyzes the NADPH-dependent reduction of 7-cyano-7-deazaguanine (preQ0) to 7-aminomethyl-7-deazaguanine (preQ1). This is NADPH-dependent 7-cyano-7-deazaguanine reductase from Bacillus mycoides (strain KBAB4) (Bacillus weihenstephanensis).